The chain runs to 192 residues: Adenylate kinase (192 aa).

Residue 10–15 (GAGKGT) coordinates ATP. Residues 30 to 59 (STGDMLREVIAKETEVGKKAKAIISSGALV) form an NMP region. AMP-binding positions include Thr31, Arg36, 57 to 59 (ALV), 85 to 88 (GYPR), and Gln92. The interval 126-142 (RRVQETVAAGGQVRLDD) is LID. Arg127 contacts ATP. Residues Arg139 and Arg150 each coordinate AMP. Ile178 provides a ligand contact to ATP.

The protein belongs to the adenylate kinase family. In terms of assembly, monomer.

Its subcellular location is the cytoplasm. The enzyme catalyses AMP + ATP = 2 ADP. Its pathway is purine metabolism; AMP biosynthesis via salvage pathway; AMP from ADP: step 1/1. Its function is as follows. Catalyzes the reversible transfer of the terminal phosphate group between ATP and AMP. Plays an important role in cellular energy homeostasis and in adenine nucleotide metabolism. The chain is Adenylate kinase from Bartonella tribocorum (strain CIP 105476 / IBS 506).